A 748-amino-acid chain; its full sequence is Photosystem I P700 chlorophyll a apoprotein A1 (748 aa).

8 helical membrane passes run 70–93 (VFSA…FHGA), 156–179 (LYTT…FHYH), 195–219 (LNHH…HVSM), 291–309 (TAHH…GHMY), 346–369 (WHAQ…HHMY), 385–411 (LSLF…IFMV), 433–455 (AIIS…LYIH), and 530–548 (FLVH…LILL). [4Fe-4S] cluster contacts are provided by Cys572 and Cys581. A run of 2 helical transmembrane segments spans residues 588 to 609 (HIFL…HFSW) and 662 to 684 (LSAY…MFLF). His673 lines the chlorophyll a' pocket. Chlorophyll a contacts are provided by Met681 and Tyr689. Position 690 (Trp690) interacts with phylloquinone. Residues 722–742 (AVGVAHYLLGGIATTWAFFLA) form a helical membrane-spanning segment.

It belongs to the PsaA/PsaB family. The PsaA/B heterodimer binds the P700 chlorophyll special pair and subsequent electron acceptors. PSI consists of a core antenna complex that captures photons, and an electron transfer chain that converts photonic excitation into a charge separation. The eukaryotic PSI reaction center is composed of at least 11 subunits. P700 is a chlorophyll a/chlorophyll a' dimer, A0 is one or more chlorophyll a, A1 is one or both phylloquinones and FX is a shared 4Fe-4S iron-sulfur center. is required as a cofactor.

It localises to the plastid. The protein resides in the chloroplast thylakoid membrane. It carries out the reaction reduced [plastocyanin] + hnu + oxidized [2Fe-2S]-[ferredoxin] = oxidized [plastocyanin] + reduced [2Fe-2S]-[ferredoxin]. Its function is as follows. PsaA and PsaB bind P700, the primary electron donor of photosystem I (PSI), as well as the electron acceptors A0, A1 and FX. PSI is a plastocyanin-ferredoxin oxidoreductase, converting photonic excitation into a charge separation, which transfers an electron from the donor P700 chlorophyll pair to the spectroscopically characterized acceptors A0, A1, FX, FA and FB in turn. Oxidized P700 is reduced on the lumenal side of the thylakoid membrane by plastocyanin. The chain is Photosystem I P700 chlorophyll a apoprotein A1 from Chara vulgaris (Common stonewort).